The following is a 31-amino-acid chain: Cytochrome b6-f complex subunit 6 (31 aa).

A helical membrane pass occupies residues 4-24 (ITSYFGFLLAVLTITSALFIG).

It belongs to the PetL family. The 4 large subunits of the cytochrome b6-f complex are cytochrome b6, subunit IV (17 kDa polypeptide, PetD), cytochrome f and the Rieske protein, while the 4 small subunits are PetG, PetL, PetM and PetN. The complex functions as a dimer.

The protein localises to the plastid. It is found in the chloroplast thylakoid membrane. In terms of biological role, component of the cytochrome b6-f complex, which mediates electron transfer between photosystem II (PSII) and photosystem I (PSI), cyclic electron flow around PSI, and state transitions. PetL is important for photoautotrophic growth as well as for electron transfer efficiency and stability of the cytochrome b6-f complex. This Cucumis sativus (Cucumber) protein is Cytochrome b6-f complex subunit 6.